The chain runs to 132 residues: Small ribosomal subunit protein uS8 (132 aa).

The protein belongs to the universal ribosomal protein uS8 family. As to quaternary structure, part of the 30S ribosomal subunit. Contacts proteins S5 and S12.

Functionally, one of the primary rRNA binding proteins, it binds directly to 16S rRNA central domain where it helps coordinate assembly of the platform of the 30S subunit. The protein is Small ribosomal subunit protein uS8 of Geobacter sp. (strain M21).